The chain runs to 260 residues: Flap endonuclease Xni (260 aa).

A Mg(2+)-binding site is contributed by Asp-109. Residues 165 to 259 (VKPSQLADYW…DIRFTGPNKA (95 aa)) enclose the 5'-3' exonuclease domain. Positions 176, 185, 187, and 190 each coordinate K(+). An interaction with DNA region spans residues 189–194 (GVGPKA).

The protein belongs to the Xni family. Mg(2+) is required as a cofactor. Requires K(+) as cofactor.

Its function is as follows. Has flap endonuclease activity. During DNA replication, flap endonucleases cleave the 5'-overhanging flap structure that is generated by displacement synthesis when DNA polymerase encounters the 5'-end of a downstream Okazaki fragment. The polypeptide is Flap endonuclease Xni (Vibrio campbellii (strain ATCC BAA-1116)).